The sequence spans 398 residues: ATP-dependent RNA helicase eIF4A (398 aa).

The Q motif motif lies at 25–53 (DSFDTMNLKPELLRGVYAYGFERPSAIQQ). The region spanning 56–226 (IMPVIKGHDV…TKFMRDPVRI (171 aa)) is the Helicase ATP-binding domain. 69 to 76 (AQSGTGKT) contacts ATP. Positions 174 to 177 (DEAD) match the DEAD box motif. A Helicase C-terminal domain is found at 237–398 (GIKQFYIAVE…EMPMNVADLI (162 aa)).

This sequence belongs to the DEAD box helicase family. eIF4A subfamily. Component of the eIF4F complex, which composition varies with external and internal environmental conditions. It is composed of at least eIF4A, eIF4E and eIF4G.

It localises to the cytoplasm. It catalyses the reaction ATP + H2O = ADP + phosphate + H(+). Its function is as follows. ATP-dependent RNA helicase which is a subunit of the eIF4F complex involved in cap recognition and is required for mRNA binding to ribosome. In the current model of translation initiation, eIF4A unwinds RNA secondary structures in the 5'-UTR of mRNAs which is necessary to allow efficient binding of the small ribosomal subunit, and subsequent scanning for the initiator codon. This chain is ATP-dependent RNA helicase eIF4A (tif1), found in Botryotinia fuckeliana (strain B05.10) (Noble rot fungus).